Here is a 278-residue protein sequence, read N- to C-terminus: Cysteine-rich repeat secretory protein 18 (278 aa).

An N-terminal signal peptide occupies residues 1–32 (MYSSSSVSKRFVLVPIVVVVTTQLLLVRNVSS). Gnk2-homologous domains follow at residues 39–147 (YLHH…SLDT) and 160–267 (PSAK…LYPF).

It belongs to the cysteine-rich repeat secretory protein family.

Its subcellular location is the secreted. This chain is Cysteine-rich repeat secretory protein 18 (CRRSP18), found in Arabidopsis thaliana (Mouse-ear cress).